The sequence spans 272 residues: UPF0759 protein YecE (272 aa).

This sequence belongs to the UPF0759 family.

This chain is UPF0759 protein YecE (yecE), found in Escherichia coli O157:H7.